We begin with the raw amino-acid sequence, 415 residues long: Putative competence-damage inducible protein (415 aa).

It belongs to the CinA family.

This chain is Putative competence-damage inducible protein, found in Listeria innocua serovar 6a (strain ATCC BAA-680 / CLIP 11262).